The sequence spans 100 residues: MTEKTITRMDLSEAVFREVGLSRNESAQLVESMLQHMSDALVRGEQVKISSFGTFSVRDKSARVGRNPKTGEEVPIQPRRVLTFRPSHLMKDRVADGNKS.

Belongs to the bacterial histone-like protein family. As to quaternary structure, heterodimer of an alpha and a beta chain.

Its function is as follows. This protein is one of the two subunits of integration host factor, a specific DNA-binding protein that functions in genetic recombination as well as in transcriptional and translational control. The chain is Integration host factor subunit alpha from Ruegeria sp. (strain TM1040) (Silicibacter sp.).